A 261-amino-acid chain; its full sequence is uncharacterized protein (261 aa).

The next 6 membrane-spanning stretches (helical) occupy residues 31 to 51, 71 to 91, 101 to 121, 130 to 150, 167 to 187, and 213 to 233; these read TFLS…TGIV, TNVM…SWLL, LAYI…AGIA, LTSS…ASFI, LLLF…IPYV, and FAWL…YLAI.

Its subcellular location is the cell membrane. This is an uncharacterized protein from Mycoplasma genitalium (strain ATCC 33530 / DSM 19775 / NCTC 10195 / G37) (Mycoplasmoides genitalium).